Reading from the N-terminus, the 638-residue chain is 1-deoxy-D-xylulose-5-phosphate synthase (638 aa).

Residues His-79 and 120-122 contribute to the thiamine diphosphate site; that span reads AHS. Asp-151 is a binding site for Mg(2+). Residues 152-153, Asn-180, Tyr-289, and Glu-371 contribute to the thiamine diphosphate site; that span reads GA. A Mg(2+)-binding site is contributed by Asn-180.

This sequence belongs to the transketolase family. DXPS subfamily. As to quaternary structure, homodimer. Requires Mg(2+) as cofactor. It depends on thiamine diphosphate as a cofactor.

The enzyme catalyses D-glyceraldehyde 3-phosphate + pyruvate + H(+) = 1-deoxy-D-xylulose 5-phosphate + CO2. It functions in the pathway metabolic intermediate biosynthesis; 1-deoxy-D-xylulose 5-phosphate biosynthesis; 1-deoxy-D-xylulose 5-phosphate from D-glyceraldehyde 3-phosphate and pyruvate: step 1/1. Catalyzes the acyloin condensation reaction between C atoms 2 and 3 of pyruvate and glyceraldehyde 3-phosphate to yield 1-deoxy-D-xylulose-5-phosphate (DXP). This chain is 1-deoxy-D-xylulose-5-phosphate synthase, found in Rhizobium leguminosarum bv. trifolii (strain WSM2304).